The following is a 230-amino-acid chain: Large ribosomal subunit protein uL4 (230 aa).

Residues 51–105 form a disordered region; that stretch reads RAAARQGTHSTKTRGDVSGGGRKPYRQKGTGRARQGSMRAPQFTGGGIVHGPKLR.

It belongs to the universal ribosomal protein uL4 family. As to quaternary structure, part of the 50S ribosomal subunit.

In terms of biological role, one of the primary rRNA binding proteins, this protein initially binds near the 5'-end of the 23S rRNA. It is important during the early stages of 50S assembly. It makes multiple contacts with different domains of the 23S rRNA in the assembled 50S subunit and ribosome. Its function is as follows. Forms part of the polypeptide exit tunnel. The protein is Large ribosomal subunit protein uL4 of Mycobacterium leprae (strain Br4923).